The chain runs to 591 residues: Negative elongation factor D (591 aa).

Residues 1–44 are disordered; it reads MAGPAPGTIMGEDYFGNASEWGEEADGGQHQEDDSGEGEDDAEV. Acidic residues predominate over residues 34-44; it reads DSGEGEDDAEV.

Belongs to the NELF-D family. The NELF complex is composed of NELFA, NELFB, NELFCD and NELFE; NELFA and NELFCD form a stable subcomplex that binds primarily through NELFCD to the N-terminus of NELFB. Binds RNA which may help to stabilize the NELF complex on nucleic acid. In vitro, the NELFA:NELFCD subcomplex binds to ssDNA and ssRNA in a sequence- and structure-dependent manner. Interacts with ARAF1. Interacts with PCF11. Interacts with NELFB. Interacts with KAT8.

It localises to the nucleus. Functionally, essential component of the NELF complex, a complex that negatively regulates the elongation of transcription by RNA polymerase II. The NELF complex, which acts via an association with the DSIF complex and causes transcriptional pausing, is counteracted by the P-TEFb kinase complex. This Mus musculus (Mouse) protein is Negative elongation factor D (Nelfcd).